The following is a 396-amino-acid chain: 1-deoxy-D-xylulose 5-phosphate reductoisomerase (396 aa).

5 residues coordinate NADPH: threonine 13, glycine 14, serine 15, isoleucine 16, and asparagine 127. Lysine 128 provides a ligand contact to 1-deoxy-D-xylulose 5-phosphate. Position 129 (glutamate 129) interacts with NADPH. Residue aspartate 153 participates in Mn(2+) binding. 1-deoxy-D-xylulose 5-phosphate contacts are provided by serine 154, glutamate 155, serine 184, and histidine 207. Glutamate 155 is a binding site for Mn(2+). Glycine 213 is a binding site for NADPH. The 1-deoxy-D-xylulose 5-phosphate site is built by serine 220, asparagine 225, lysine 226, and glutamate 229. Residue glutamate 229 coordinates Mn(2+).

Belongs to the DXR family. The cofactor is Mg(2+). Mn(2+) is required as a cofactor.

It carries out the reaction 2-C-methyl-D-erythritol 4-phosphate + NADP(+) = 1-deoxy-D-xylulose 5-phosphate + NADPH + H(+). Its pathway is isoprenoid biosynthesis; isopentenyl diphosphate biosynthesis via DXP pathway; isopentenyl diphosphate from 1-deoxy-D-xylulose 5-phosphate: step 1/6. Functionally, catalyzes the NADPH-dependent rearrangement and reduction of 1-deoxy-D-xylulose-5-phosphate (DXP) to 2-C-methyl-D-erythritol 4-phosphate (MEP). The sequence is that of 1-deoxy-D-xylulose 5-phosphate reductoisomerase from Pseudomonas fluorescens (strain Pf0-1).